The following is a 341-amino-acid chain: Phenylalanine--tRNA ligase alpha subunit (341 aa).

E254 contacts Mg(2+).

It belongs to the class-II aminoacyl-tRNA synthetase family. Phe-tRNA synthetase alpha subunit type 1 subfamily. As to quaternary structure, tetramer of two alpha and two beta subunits. It depends on Mg(2+) as a cofactor.

It is found in the cytoplasm. It carries out the reaction tRNA(Phe) + L-phenylalanine + ATP = L-phenylalanyl-tRNA(Phe) + AMP + diphosphate + H(+). This Chlorobium phaeobacteroides (strain DSM 266 / SMG 266 / 2430) protein is Phenylalanine--tRNA ligase alpha subunit.